Consider the following 339-residue polypeptide: Pre-mRNA-splicing factor syf2 (339 aa).

Residues 1 to 136 (MPPEKKRKTE…LQSDPSQLTA (136 aa)) are disordered. A compositionally biased stretch (basic and acidic residues) spans 7–16 (RKTEPEDKAE). Residues 17–37 (VTQQENDVAESTTEPNNQTVT) show a composition bias toward polar residues. The segment covering 45–93 (VTEAALATTSSSSPPVLSASETAQPDTAATSQSSSTPPTSTSAAESAAA) has biased composition (low complexity). Residues 94-103 (KARERAERFR) show a composition bias toward basic and acidic residues. The span at 126–135 (RLQSDPSQLT) shows a compositional bias: polar residues.

The protein belongs to the SYF2 family. As to quaternary structure, associated with the spliceosome.

The protein resides in the nucleus. Involved in pre-mRNA splicing. The protein is Pre-mRNA-splicing factor syf2 (msp-4) of Neurospora crassa (strain ATCC 24698 / 74-OR23-1A / CBS 708.71 / DSM 1257 / FGSC 987).